Consider the following 153-residue polypeptide: Putative trans-acting regulator pXO2-62/BXB0076/GBAA_pXO2_0076 (153 aa).

This sequence belongs to the AtxA/AcpA family.

In Bacillus anthracis, this protein is Putative trans-acting regulator pXO2-62/BXB0076/GBAA_pXO2_0076.